The primary structure comprises 671 residues: tRNA 5-methylaminomethyl-2-thiouridine biosynthesis bifunctional protein MnmC (671 aa).

Residues 1 to 245 form a tRNA (mnm(5)s(2)U34)-methyltransferase region; the sequence is MVNVMNTLSF…KREMLWGEKP (245 aa). An FAD-dependent cmnm(5)s(2)U34 oxidoreductase region spans residues 272–671; the sequence is VGGGVASLFV…RKLLKGSKVE (400 aa).

This sequence in the N-terminal section; belongs to the methyltransferase superfamily. tRNA (mnm(5)s(2)U34)-methyltransferase family. It in the C-terminal section; belongs to the DAO family. FAD serves as cofactor.

The protein resides in the cytoplasm. The enzyme catalyses 5-aminomethyl-2-thiouridine(34) in tRNA + S-adenosyl-L-methionine = 5-methylaminomethyl-2-thiouridine(34) in tRNA + S-adenosyl-L-homocysteine + H(+). In terms of biological role, catalyzes the last two steps in the biosynthesis of 5-methylaminomethyl-2-thiouridine (mnm(5)s(2)U) at the wobble position (U34) in tRNA. Catalyzes the FAD-dependent demodification of cmnm(5)s(2)U34 to nm(5)s(2)U34, followed by the transfer of a methyl group from S-adenosyl-L-methionine to nm(5)s(2)U34, to form mnm(5)s(2)U34. This chain is tRNA 5-methylaminomethyl-2-thiouridine biosynthesis bifunctional protein MnmC, found in Actinobacillus pleuropneumoniae serotype 3 (strain JL03).